Consider the following 455-residue polypeptide: Phosphomethylpyrimidine synthase (455 aa).

Substrate-binding positions include Asn-80, Met-109, Tyr-139, His-175, 195–197 (SRG), 236–239 (DALR), and Glu-275. A Zn(2+)-binding site is contributed by His-279. Position 302 (Tyr-302) interacts with substrate. His-343 contacts Zn(2+). 3 residues coordinate [4Fe-4S] cluster: Cys-423, Cys-426, and Cys-431.

The protein belongs to the ThiC family. The cofactor is [4Fe-4S] cluster.

The catalysed reaction is 5-amino-1-(5-phospho-beta-D-ribosyl)imidazole + S-adenosyl-L-methionine = 4-amino-2-methyl-5-(phosphooxymethyl)pyrimidine + CO + 5'-deoxyadenosine + formate + L-methionine + 3 H(+). It participates in cofactor biosynthesis; thiamine diphosphate biosynthesis. Catalyzes the synthesis of the hydroxymethylpyrimidine phosphate (HMP-P) moiety of thiamine from aminoimidazole ribotide (AIR) in a radical S-adenosyl-L-methionine (SAM)-dependent reaction. The protein is Phosphomethylpyrimidine synthase of Synechococcus sp. (strain JA-3-3Ab) (Cyanobacteria bacterium Yellowstone A-Prime).